The primary structure comprises 918 residues: Bromodomain testis-specific protein (918 aa).

The interval 1-26 (MSDVKPPQHFTMNGNPPPPEFKNPKK) is disordered. The 107-residue stretch at 29-135 (RLTNHLQYIE…KLFLEKVAEM (107 aa)) folds into the Bromo 1 domain. The short motif at 204–215 (NGVKRKADTTTP) is the Nuclear localization signal element. Disordered regions lie at residues 241–267 (RGSGRPIKPPCKDLPESPPQHQVGRRT), 379–430 (EPKN…RAHR), 575–712 (KNKP…SLVS), 738–764 (IPPLLSPLTSPSAAMPATGSQSTSSSQ), and 862–899 (DTPKAPEPSSVLQNSVDREREMARKREQERRRREAMSG). The Bromo 2 domain occupies 267 to 376 (TKLSERLKYC…DVFEFRFSKI (110 aa)). A compositionally biased stretch (low complexity) spans 399–416 (SPSSSESSDSESSSPENS). Residues 426-452 (ERAHRLASLEEQQLKAVREQLQLLTQT) are a coiled coil. The NET domain occupies 496–578 (DSEEEMNTLP…GCLRKKKNKP (83 aa)). Residues 575-584 (KNKPPKKSKI) are compositionally biased toward basic residues. The span at 605–617 (KIETDGEIKDTTH) shows a compositional bias: basic and acidic residues. Composition is skewed to low complexity over residues 622–648 (SDSSSSSSSSDSSSSDSSSSDSCDSDS) and 739–764 (PPLLSPLTSPSAAMPATGSQSTSSSQ). Residues 815–902 (EKELTTASRG…RREAMSGVID (88 aa)) adopt a coiled-coil conformation. Over residues 877 to 896 (VDREREMARKREQERRRREA) the composition is skewed to basic and acidic residues.

This sequence belongs to the BET family.

It is found in the nucleus. Functionally, testis-specific chromatin protein that specifically binds histone H4 acetylated at 'Lys-5' and 'Lys-8' (H4K5ac and H4K8ac, respectively) and plays a key role in spermatogenesis. Required in late pachytene spermatocytes: plays a role in meiotic and post-meiotic cells by binding to acetylated histones at the promoter of specific meiotic and post-meiotic genes, facilitating their activation at the appropriate time. In the post-meiotic phase of spermatogenesis, binds to hyperacetylated histones and participates in their general removal from DNA. Also recognizes and binds a subset of butyrylated histones: able to bind histone H4 butyrylated at 'Lys-8' (H4K8ac), while it is not able to bind H4 butyrylated at 'Lys-5' (H4K5ac). This chain is Bromodomain testis-specific protein (brdt), found in Danio rerio (Zebrafish).